A 210-amino-acid polypeptide reads, in one-letter code: 3-demethoxyubiquinol 3-hydroxylase (210 aa).

The Fe cation site is built by E59, E89, H92, E141, E173, and H176.

The protein belongs to the COQ7 family. The cofactor is Fe cation.

It localises to the cell membrane. It carries out the reaction a 5-methoxy-2-methyl-3-(all-trans-polyprenyl)benzene-1,4-diol + AH2 + O2 = a 3-demethylubiquinol + A + H2O. It participates in cofactor biosynthesis; ubiquinone biosynthesis. Its function is as follows. Catalyzes the hydroxylation of 2-nonaprenyl-3-methyl-6-methoxy-1,4-benzoquinol during ubiquinone biosynthesis. The sequence is that of 3-demethoxyubiquinol 3-hydroxylase from Albidiferax ferrireducens (strain ATCC BAA-621 / DSM 15236 / T118) (Rhodoferax ferrireducens).